A 426-amino-acid polypeptide reads, in one-letter code: Serine hydroxymethyltransferase (426 aa).

Residues Leu-113 and Gly-117–Leu-119 contribute to the (6S)-5,6,7,8-tetrahydrofolate site. At Lys-222 the chain carries N6-(pyridoxal phosphate)lysine. Ser-363 to Phe-365 serves as a coordination point for (6S)-5,6,7,8-tetrahydrofolate.

Belongs to the SHMT family. As to quaternary structure, homodimer. It depends on pyridoxal 5'-phosphate as a cofactor.

It localises to the cytoplasm. It carries out the reaction (6R)-5,10-methylene-5,6,7,8-tetrahydrofolate + glycine + H2O = (6S)-5,6,7,8-tetrahydrofolate + L-serine. It participates in one-carbon metabolism; tetrahydrofolate interconversion. Its pathway is amino-acid biosynthesis; glycine biosynthesis; glycine from L-serine: step 1/1. Its function is as follows. Catalyzes the reversible interconversion of serine and glycine with tetrahydrofolate (THF) serving as the one-carbon carrier. This reaction serves as the major source of one-carbon groups required for the biosynthesis of purines, thymidylate, methionine, and other important biomolecules. Also exhibits THF-independent aldolase activity toward beta-hydroxyamino acids, producing glycine and aldehydes, via a retro-aldol mechanism. The protein is Serine hydroxymethyltransferase of Porphyromonas gingivalis (strain ATCC 33277 / DSM 20709 / CIP 103683 / JCM 12257 / NCTC 11834 / 2561).